The following is a 227-amino-acid chain: 7-cyano-7-deazaguanine synthase (227 aa).

Phe8 to Leu18 provides a ligand contact to ATP. Zn(2+) contacts are provided by Cys187, Cys196, Cys199, and Cys202.

Belongs to the QueC family. Zn(2+) is required as a cofactor.

It catalyses the reaction 7-carboxy-7-deazaguanine + NH4(+) + ATP = 7-cyano-7-deazaguanine + ADP + phosphate + H2O + H(+). Its pathway is purine metabolism; 7-cyano-7-deazaguanine biosynthesis. Catalyzes the ATP-dependent conversion of 7-carboxy-7-deazaguanine (CDG) to 7-cyano-7-deazaguanine (preQ(0)). This chain is 7-cyano-7-deazaguanine synthase, found in Shewanella pealeana (strain ATCC 700345 / ANG-SQ1).